The following is a 163-amino-acid chain: Probable histone H2A.4 (163 aa).

Disordered regions lie at residues 1–30 (MEVG…VSRS) and 134–163 (SAAA…AAAA). The span at 12–21 (GAGGRRGGGG) shows a compositional bias: gly residues. Residues 147–163 (KSPKKATTKSPKKAAAA) are compositionally biased toward basic residues. Short sequence motifs (SPKK motif) lie at residues 148-151 (SPKK) and 156-159 (SPKK).

Belongs to the histone H2A family. The nucleosome is a histone octamer containing two molecules each of H2A, H2B, H3 and H4 assembled in one H3-H4 heterotetramer and two H2A-H2B heterodimers. The octamer wraps approximately 147 bp of DNA.

It localises to the nucleus. The protein resides in the chromosome. In terms of biological role, core component of nucleosome. Nucleosomes wrap and compact DNA into chromatin, limiting DNA accessibility to the cellular machineries which require DNA as a template. Histones thereby play a central role in transcription regulation, DNA repair, DNA replication and chromosomal stability. DNA accessibility is regulated via a complex set of post-translational modifications of histones, also called histone code, and nucleosome remodeling. In Oryza sativa subsp. indica (Rice), this protein is Probable histone H2A.4.